Here is a 616-residue protein sequence, read N- to C-terminus: Dihydroxy-acid dehydratase (616 aa).

D81 is a binding site for Mg(2+). Residue C122 participates in [2Fe-2S] cluster binding. 2 residues coordinate Mg(2+): D123 and K124. At K124 the chain carries N6-carboxylysine. [2Fe-2S] cluster is bound at residue C195. Residue E491 participates in Mg(2+) binding. The Proton acceptor role is filled by S517.

This sequence belongs to the IlvD/Edd family. Homodimer. Requires [2Fe-2S] cluster as cofactor. Mg(2+) is required as a cofactor.

It catalyses the reaction (2R)-2,3-dihydroxy-3-methylbutanoate = 3-methyl-2-oxobutanoate + H2O. It carries out the reaction (2R,3R)-2,3-dihydroxy-3-methylpentanoate = (S)-3-methyl-2-oxopentanoate + H2O. The protein operates within amino-acid biosynthesis; L-isoleucine biosynthesis; L-isoleucine from 2-oxobutanoate: step 3/4. It participates in amino-acid biosynthesis; L-valine biosynthesis; L-valine from pyruvate: step 3/4. Functions in the biosynthesis of branched-chain amino acids. Catalyzes the dehydration of (2R,3R)-2,3-dihydroxy-3-methylpentanoate (2,3-dihydroxy-3-methylvalerate) into 2-oxo-3-methylpentanoate (2-oxo-3-methylvalerate) and of (2R)-2,3-dihydroxy-3-methylbutanoate (2,3-dihydroxyisovalerate) into 2-oxo-3-methylbutanoate (2-oxoisovalerate), the penultimate precursor to L-isoleucine and L-valine, respectively. This chain is Dihydroxy-acid dehydratase, found in Methylobacillus flagellatus (strain ATCC 51484 / DSM 6875 / VKM B-1610 / KT).